The chain runs to 168 residues: ATP synthase subunit b (168 aa).

The helical transmembrane segment at 9 to 29 (LFNLSTFVFTIINLLVLYYIL) threads the bilayer.

The protein belongs to the ATPase B chain family. As to quaternary structure, F-type ATPases have 2 components, F(1) - the catalytic core - and F(0) - the membrane proton channel. F(1) has five subunits: alpha(3), beta(3), gamma(1), delta(1), epsilon(1). F(0) has three main subunits: a(1), b(2) and c(10-14). The alpha and beta chains form an alternating ring which encloses part of the gamma chain. F(1) is attached to F(0) by a central stalk formed by the gamma and epsilon chains, while a peripheral stalk is formed by the delta and b chains.

It localises to the cell membrane. Functionally, f(1)F(0) ATP synthase produces ATP from ADP in the presence of a proton or sodium gradient. F-type ATPases consist of two structural domains, F(1) containing the extramembraneous catalytic core and F(0) containing the membrane proton channel, linked together by a central stalk and a peripheral stalk. During catalysis, ATP synthesis in the catalytic domain of F(1) is coupled via a rotary mechanism of the central stalk subunits to proton translocation. In terms of biological role, component of the F(0) channel, it forms part of the peripheral stalk, linking F(1) to F(0). The polypeptide is ATP synthase subunit b (Caldanaerobacter subterraneus subsp. tengcongensis (strain DSM 15242 / JCM 11007 / NBRC 100824 / MB4) (Thermoanaerobacter tengcongensis)).